Here is a 290-residue protein sequence, read N- to C-terminus: MASLKEMRNRIGSVKATQKITKAMQMVAAAKLRKAQDAAQNARPYAQRMASVIANLAAGVSGDGAPKLLAGTGSDRRHLVVVATSDRGLAGGFNSAIVRAARERINALSAEGKDVRVITIGRKARDQLRRLAGERLVATYEAGSNPSLAVAEEVSARIQEMFEAGEVDVVHLVFSSFKSVVTQQPTVRQLIPAEVAAGQAPLDLKGATYEYEPDEEQILETLLPRNVTTQLLSATLENQAGFYAAQMTAMDNATRNAGDMIASLTLQYNRSRQAQITKELIEIISGAEAL.

The protein belongs to the ATPase gamma chain family. F-type ATPases have 2 components, CF(1) - the catalytic core - and CF(0) - the membrane proton channel. CF(1) has five subunits: alpha(3), beta(3), gamma(1), delta(1), epsilon(1). CF(0) has three main subunits: a, b and c.

It localises to the cell inner membrane. Functionally, produces ATP from ADP in the presence of a proton gradient across the membrane. The gamma chain is believed to be important in regulating ATPase activity and the flow of protons through the CF(0) complex. This chain is ATP synthase gamma chain, found in Phenylobacterium zucineum (strain HLK1).